Consider the following 1176-residue polypeptide: DNA-directed RNA polymerase subunit beta (1176 aa).

Residues 13-30 show a composition bias toward polar residues; sequence TDASLHQGRPQSSSNSSV. The interval 13-35 is disordered; sequence TDASLHQGRPQSSSNSSVPGAPN.

This sequence belongs to the RNA polymerase beta chain family. As to quaternary structure, the RNAP catalytic core consists of 2 alpha, 1 beta, 1 beta' and 1 omega subunit. When a sigma factor is associated with the core the holoenzyme is formed, which can initiate transcription.

The catalysed reaction is RNA(n) + a ribonucleoside 5'-triphosphate = RNA(n+1) + diphosphate. DNA-dependent RNA polymerase catalyzes the transcription of DNA into RNA using the four ribonucleoside triphosphates as substrates. This Mycobacterium ulcerans (strain Agy99) protein is DNA-directed RNA polymerase subunit beta.